The sequence spans 330 residues: Class III chitinase ARB_03514 (330 aa).

Positions 1–22 (MSSVKNILSFVALFAGVKTAYA) are cleaved as a signal peptide. One can recognise a GH18 domain in the interval 23–314 (GLNSPGHNNV…SAVKGALSAG (292 aa)). N61 and N135 each carry an N-linked (GlcNAc...) asparagine glycan. E155 functions as the Proton donor in the catalytic mechanism. N278 and N302 each carry an N-linked (GlcNAc...) asparagine glycan.

This sequence belongs to the glycosyl hydrolase 18 family. Chitinase class III subfamily. Monomer.

The protein localises to the secreted. The enzyme catalyses Random endo-hydrolysis of N-acetyl-beta-D-glucosaminide (1-&gt;4)-beta-linkages in chitin and chitodextrins.. Its function is as follows. Secreted chitinase involved in the degradation of chitin, a component of the cell walls of fungi and exoskeletal elements of some animals (including worms and arthropods). Plays a morphogenetic role during apical growth, cell division and differentiation (cell wall morphogenesis). In Arthroderma benhamiae (strain ATCC MYA-4681 / CBS 112371) (Trichophyton mentagrophytes), this protein is Class III chitinase ARB_03514.